Here is a 300-residue protein sequence, read N- to C-terminus: Acetyl-coenzyme A carboxylase carboxyl transferase subunit beta 2 (300 aa).

Positions 26-294 (VWVKCPSCRE…SGAYSSEAVA (269 aa)) constitute a CoA carboxyltransferase N-terminal domain. Residues Cys-30, Cys-33, Cys-49, and Cys-51 each contribute to the Zn(2+) site. The segment at 30 to 51 (CPSCRELIYHKQLAERMKVCRC) adopts a C4-type zinc-finger fold.

The protein belongs to the AccD/PCCB family. In terms of assembly, acetyl-CoA carboxylase is a heterohexamer composed of biotin carboxyl carrier protein (AccB), biotin carboxylase (AccC) and two subunits each of ACCase subunit alpha (AccA) and ACCase subunit beta (AccD). The cofactor is Zn(2+).

The protein resides in the cytoplasm. The catalysed reaction is N(6)-carboxybiotinyl-L-lysyl-[protein] + acetyl-CoA = N(6)-biotinyl-L-lysyl-[protein] + malonyl-CoA. The protein operates within lipid metabolism; malonyl-CoA biosynthesis; malonyl-CoA from acetyl-CoA: step 1/1. In terms of biological role, component of the acetyl coenzyme A carboxylase (ACC) complex. Biotin carboxylase (BC) catalyzes the carboxylation of biotin on its carrier protein (BCCP) and then the CO(2) group is transferred by the transcarboxylase to acetyl-CoA to form malonyl-CoA. This Roseiflexus castenholzii (strain DSM 13941 / HLO8) protein is Acetyl-coenzyme A carboxylase carboxyl transferase subunit beta 2.